Consider the following 156-residue polypeptide: Small ribosomal subunit protein uS7 (156 aa).

This sequence belongs to the universal ribosomal protein uS7 family. In terms of assembly, part of the 30S ribosomal subunit. Contacts proteins S9 and S11.

Its function is as follows. One of the primary rRNA binding proteins, it binds directly to 16S rRNA where it nucleates assembly of the head domain of the 30S subunit. Is located at the subunit interface close to the decoding center, probably blocks exit of the E-site tRNA. The polypeptide is Small ribosomal subunit protein uS7 (Sphingopyxis alaskensis (strain DSM 13593 / LMG 18877 / RB2256) (Sphingomonas alaskensis)).